Reading from the N-terminus, the 1050-residue chain is uncharacterized protein (1050 aa).

Coiled coils occupy residues 1–420, 463–627, and 692–981; these read MEKV…TAKM, YSLL…IREL, and NDSK…NLLS.

This is an uncharacterized protein from Arabidopsis thaliana (Mouse-ear cress).